Here is a 202-residue protein sequence, read N- to C-terminus: Ras-related protein RABD2b (202 aa).

Residues 15-23 (GDSGVGKSC), 33-40 (YLDSYIST), 63-67 (DTAGQ), 121-124 (NKND), and 151-153 (SAK) each bind GTP. Positions 37-45 (YISTIGVDF) match the Effector region motif. A disordered region spans residues 174 to 202 (ASQPAGGAKPPTVQIRGQPVNQQSGCCSS). A compositionally biased stretch (polar residues) spans 192 to 202 (PVNQQSGCCSS). 2 S-geranylgeranyl cysteine lipidation sites follow: Cys-199 and Cys-200.

This sequence belongs to the small GTPase superfamily. Rab family.

Its subcellular location is the golgi apparatus. The protein resides in the trans-Golgi network membrane. It localises to the golgi apparatus membrane. Its function is as follows. Protein transport. Regulator of membrane traffic from the Golgi apparatus towards the endoplasmic reticulum (ER). The chain is Ras-related protein RABD2b (RABD2B) from Arabidopsis thaliana (Mouse-ear cress).